A 48-amino-acid polypeptide reads, in one-letter code: Large ribosomal subunit protein bL32 (48 aa).

The tract at residues 28 to 48 (VKDKDGSWKMPHRINKTTGEY) is disordered.

The protein belongs to the bacterial ribosomal protein bL32 family.

The protein is Large ribosomal subunit protein bL32 of Campylobacter concisus (strain 13826).